The primary structure comprises 494 residues: Probable terminase, large subunit (494 aa).

ATP is bound at residue 26–33; the sequence is ADVLFGKT. The short motif at 56 to 63 is the Walker A motif element; that stretch reads SGHGTGKS. Residues 158-163 carry the Walker B motif motif; it reads LYIIDE. The For ATPase activity role is filled by glutamate 163. Mg(2+) contacts are provided by aspartate 293, aspartate 356, and aspartate 446.

Belongs to the punalikevirus large terminase family. In terms of assembly, interacts with pacA protein. Requires Mg(2+) as cofactor.

Its function is as follows. Component of the molecular motor that translocates genomic DNA in empty capsid during DNA packaging. Heterooligomerize with small terminase protein to be docked on capsid portal protein. Forms a ring-like structure through which genomic DNA is translocated into the capsid. May have or induce an endonuclease activity to cleave the genome concatemer after encapsidation. This is Probable terminase, large subunit (pacB) from Escherichia coli (Bacteriophage P7).